Here is a 271-residue protein sequence, read N- to C-terminus: MVENIGNGSAELVSYAKLNLYLDVLGKRSDEYHEIVGLFQTISLHDTLTVEICDGGFYLESNVALPSDNTIKRAWEMFRKNTGEEFGLKVTLKKKVPVGSGLGGGSSNAAAILRYLGEVFKIPLEDLLNIAAQVGSDVPFFLYGGTALVRGRGEIVEKLEDIEGYSVNLFFPGIHSSTKEMYLSLTPEMYRKGPGRVEELHRAYLERDYEKIRKLSYNVFEKVFLEKHPEVMYGLRNFGDGSIVKMMTGSGSAFFALYPLDEGNYPFVGGV.

Lysine 17 is an active-site residue. 97–107 is a binding site for ATP; sequence PVGSGLGGGSS. The active site involves aspartate 137.

Belongs to the GHMP kinase family. IspE subfamily.

It carries out the reaction 4-CDP-2-C-methyl-D-erythritol + ATP = 4-CDP-2-C-methyl-D-erythritol 2-phosphate + ADP + H(+). It participates in isoprenoid biosynthesis; isopentenyl diphosphate biosynthesis via DXP pathway; isopentenyl diphosphate from 1-deoxy-D-xylulose 5-phosphate: step 3/6. Its function is as follows. Catalyzes the phosphorylation of the position 2 hydroxy group of 4-diphosphocytidyl-2C-methyl-D-erythritol. The chain is 4-diphosphocytidyl-2-C-methyl-D-erythritol kinase from Thermotoga petrophila (strain ATCC BAA-488 / DSM 13995 / JCM 10881 / RKU-1).